Here is a 221-residue protein sequence, read N- to C-terminus: Phosphoribosylformylglycinamidine synthase subunit PurQ (221 aa).

The Glutamine amidotransferase type-1 domain occupies 2–221; it reads KTAVIQFPGS…VFESLKTVKK (220 aa). Catalysis depends on C87, which acts as the Nucleophile. Catalysis depends on residues H195 and E197.

Part of the FGAM synthase complex composed of 1 PurL, 1 PurQ and 2 PurS subunits.

Its subcellular location is the cytoplasm. It catalyses the reaction N(2)-formyl-N(1)-(5-phospho-beta-D-ribosyl)glycinamide + L-glutamine + ATP + H2O = 2-formamido-N(1)-(5-O-phospho-beta-D-ribosyl)acetamidine + L-glutamate + ADP + phosphate + H(+). It carries out the reaction L-glutamine + H2O = L-glutamate + NH4(+). Its pathway is purine metabolism; IMP biosynthesis via de novo pathway; 5-amino-1-(5-phospho-D-ribosyl)imidazole from N(2)-formyl-N(1)-(5-phospho-D-ribosyl)glycinamide: step 1/2. Part of the phosphoribosylformylglycinamidine synthase complex involved in the purines biosynthetic pathway. Catalyzes the ATP-dependent conversion of formylglycinamide ribonucleotide (FGAR) and glutamine to yield formylglycinamidine ribonucleotide (FGAM) and glutamate. The FGAM synthase complex is composed of three subunits. PurQ produces an ammonia molecule by converting glutamine to glutamate. PurL transfers the ammonia molecule to FGAR to form FGAM in an ATP-dependent manner. PurS interacts with PurQ and PurL and is thought to assist in the transfer of the ammonia molecule from PurQ to PurL. This Deinococcus radiodurans (strain ATCC 13939 / DSM 20539 / JCM 16871 / CCUG 27074 / LMG 4051 / NBRC 15346 / NCIMB 9279 / VKM B-1422 / R1) protein is Phosphoribosylformylglycinamidine synthase subunit PurQ.